We begin with the raw amino-acid sequence, 731 residues long: Alpha-1,4-glucan:maltose-1-phosphate maltosyltransferase (731 aa).

Positions 1–10 (MEAQHNETEA) are enriched in basic and acidic residues. The disordered stretch occupies residues 1-31 (MEAQHNETEAAGKPAAKKTTRTRKPRASKQA). Over residues 15-27 (AAKKTTRTRKPRA) the composition is skewed to basic residues. Alpha-maltose 1-phosphate is bound by residues lysine 321, glutamine 381, and aspartate 416. Aspartate 451 functions as the Nucleophile in the catalytic mechanism. Asparagine 452 contacts alpha-maltose 1-phosphate. The active-site Proton donor is glutamate 480. Residue 590-591 (KF) participates in alpha-maltose 1-phosphate binding.

The protein belongs to the glycosyl hydrolase 13 family. GlgE subfamily. Homodimer.

The enzyme catalyses alpha-maltose 1-phosphate + [(1-&gt;4)-alpha-D-glucosyl](n) = [(1-&gt;4)-alpha-D-glucosyl](n+2) + phosphate. In terms of biological role, maltosyltransferase that uses maltose 1-phosphate (M1P) as the sugar donor to elongate linear or branched alpha-(1-&gt;4)-glucans. Is involved in a branched alpha-glucan biosynthetic pathway from trehalose, together with TreS, Mak and GlgB. This is Alpha-1,4-glucan:maltose-1-phosphate maltosyltransferase from Bifidobacterium animalis subsp. lactis (strain Bl-04 / DGCC2908 / RB 4825 / SD5219).